Reading from the N-terminus, the 59-residue chain is Bacteriocin curvacin-A (59 aa).

Positions 1 to 18 are excised as a propeptide; that stretch reads MNNVKELSMTELQTITGG. An intrachain disulfide couples Cys-28 to Cys-33.

Belongs to the bacteriocin class IIA/YGNGV family.

The protein localises to the secreted. Bactericidal activity; inhibits closely related Lactobacilli, Listeria monocytogenes and ivanovvi, Enterococcus faecalis, Carnobacterium sp and Brocothrix thermosphacta. This Latilactobacillus curvatus (Lactobacillus curvatus) protein is Bacteriocin curvacin-A (curA).